Here is a 193-residue protein sequence, read N- to C-terminus: Xanthine phosphoribosyltransferase (193 aa).

Xanthine is bound by residues L20 and N27. 128 to 132 (ASGGT) is a 5-phospho-alpha-D-ribose 1-diphosphate binding site. K156 provides a ligand contact to xanthine.

This sequence belongs to the purine/pyrimidine phosphoribosyltransferase family. Xpt subfamily. As to quaternary structure, homodimer.

The protein localises to the cytoplasm. The enzyme catalyses XMP + diphosphate = xanthine + 5-phospho-alpha-D-ribose 1-diphosphate. Its pathway is purine metabolism; XMP biosynthesis via salvage pathway; XMP from xanthine: step 1/1. Converts the preformed base xanthine, a product of nucleic acid breakdown, to xanthosine 5'-monophosphate (XMP), so it can be reused for RNA or DNA synthesis. The polypeptide is Xanthine phosphoribosyltransferase (Deinococcus deserti (strain DSM 17065 / CIP 109153 / LMG 22923 / VCD115)).